The primary structure comprises 164 residues: Elicitin-like protein 2 (164 aa).

Residues M1 to A22 form the signal peptide. Disulfide bonds link C25-C91, C47-C76, and C71-C118. Residues I121–C164 are disordered. Over residues T127–S156 the composition is skewed to low complexity.

It belongs to the elicitin family.

Its subcellular location is the secreted. Functionally, induces local and distal defense responses (incompatible hypersensitive reaction) in plants from the solanaceae and cruciferae families. Elicits leaf necrosis and causes the accumulation of pathogenesis-related proteins. Might interact with the lipidic molecules of the plasma membrane. This is Elicitin-like protein 2 (POD-2) from Pythium oligandrum (Mycoparasitic fungus).